A 416-amino-acid chain; its full sequence is Lipid phosphate phosphatase delta (416 aa).

Helical transmembrane passes span 72–92 (FFSG…LPLL) and 104–124 (MTLL…VVSA). The phosphatase sequence motif I stretch occupies residues 119–127 (KDVVSAPRP). A phosphatase sequence motif II region spans residues 151–154 (PSSH). Histidine 154 (proton donor) is an active-site residue. Residues 178 to 198 (VSIQYYGFALACLLVALIAFG) form a helical membrane-spanning segment. The interval 198-209 (GRVYLGMHSVVD) is phosphatase sequence motif III. The Nucleophile role is filled by histidine 205. 5 consecutive transmembrane segments (helical) span residues 207–227 (VVDI…WLTV), 241–261 (VSSF…TPEH), 266–286 (YEYH…VQQT), 302–322 (ELPI…ILLV), and 393–413 (FFQY…LFSY).

Belongs to the type 2 lipid phosphate phosphatase family.

Its subcellular location is the endoplasmic reticulum membrane. In terms of biological role, functions as a sphingoid long-chain base phosphate (LCBP) phosphatase. May play a role in the regulation of LCBP levels and be involved in stomatal responses through LCBP-mediated ABA signaling. This is Lipid phosphate phosphatase delta (LPPD) from Arabidopsis thaliana (Mouse-ear cress).